A 65-amino-acid chain; its full sequence is Small ribosomal subunit protein bS21 (65 aa).

Residues 44–65 (DDRLKRSRGKRRAQRANEERNS) form a disordered region. A compositionally biased stretch (basic residues) spans 48–57 (KRSRGKRRAQ).

This sequence belongs to the bacterial ribosomal protein bS21 family.

The protein is Small ribosomal subunit protein bS21 of Prosthecochloris aestuarii (strain DSM 271 / SK 413).